We begin with the raw amino-acid sequence, 283 residues long: Polyamine aminopropyltransferase (283 aa).

The PABS domain occupies 2–238 (ELWYTEEWTE…GHWLFGFASK (237 aa)). Q31 is an S-methyl-5'-thioadenosine binding site. Spermidine-binding residues include H62 and D86. Residues E106 and 137–138 (DG) contribute to the S-methyl-5'-thioadenosine site. The Proton acceptor role is filled by D156. A spermidine-binding site is contributed by 156-159 (DSTD). P163 lines the S-methyl-5'-thioadenosine pocket.

This sequence belongs to the spermidine/spermine synthase family. Homodimer or homotetramer.

The protein resides in the cytoplasm. It catalyses the reaction S-adenosyl 3-(methylsulfanyl)propylamine + putrescine = S-methyl-5'-thioadenosine + spermidine + H(+). It participates in amine and polyamine biosynthesis; spermidine biosynthesis; spermidine from putrescine: step 1/1. Its function is as follows. Catalyzes the irreversible transfer of a propylamine group from the amino donor S-adenosylmethioninamine (decarboxy-AdoMet) to putrescine (1,4-diaminobutane) to yield spermidine. The sequence is that of Polyamine aminopropyltransferase from Clostridioides difficile (strain 630) (Peptoclostridium difficile).